Here is a 343-residue protein sequence, read N- to C-terminus: General transcription and DNA repair factor IIH subunit TFB6 (343 aa).

Position 69 is a phosphotyrosine (Tyr-69). A phosphothreonine mark is found at Thr-71 and Thr-84. A phosphoserine mark is found at Ser-104, Ser-105, Ser-108, and Ser-342.

Component of the general transcription factor TFIIH, composed of a 7-subunit TFIIH core complex composed of XPB/SSL2, XPD/RAD3, SSL1, TFB1, TFB2, TFB4 and TFB5 which is active in NER; the 3-subunit CTD-kinase module TFIIK composed of CCL1, KIN28, and TFB3 which is active in transcription; as well as TFB6 that regulates SSL2 association with the complex. Post-translationally, phosphorylation leads the dissociation of from SSL2.

It is found in the cytoplasm. The protein resides in the nucleus. In terms of biological role, component of the general transcription and DNA repair factor IIH (TFIIH) core complex, which is involved in general and transcription-coupled nucleotide excision repair (NER) of damaged DNA and, when complexed to TFIIK, in RNA transcription by RNA polymerase II. In NER, TFIIH acts by opening DNA around the lesion to allow the excision of the damaged oligonucleotide and its replacement by a new DNA fragment. In transcription, TFIIH has an essential role in transcription initiation. When the pre-initiation complex (PIC) has been established, TFIIH is required for promoter opening and promoter escape. Phosphorylation of the C-terminal tail (CTD) of the largest subunit of RNA polymerase II by the kinase module TFIIK controls the initiation of transcription. TFB6 facilitates dissociation of the SSL2 helicase from TFIIH after transcription initiation. This is General transcription and DNA repair factor IIH subunit TFB6 from Saccharomyces cerevisiae (strain ATCC 204508 / S288c) (Baker's yeast).